Consider the following 162-residue polypeptide: Caveolin-2 (162 aa).

The Cytoplasmic portion of the chain corresponds to 1–86; it reads MGLETEKADV…FEVSKYVIYK (86 aa). Y19 is modified (phosphotyrosine; by SRC). 3 positions are modified to phosphoserine: S20, S23, and S36. Residues 87–107 constitute an intramembrane region (helical); it reads FLTLLLAMPMAFAAGVLFATL. Residues 108–162 are Cytoplasmic-facing; it reads SCLHIWIIMPFVKTCLMVLPSVQTIWKSVTDAVIAPLCSSVGRSFSSVSLQVSHD.

It belongs to the caveolin family. In terms of assembly, monomer or homodimer. Interacts with CAV1; the interaction forms a stable heterooligomeric complex that is required for targeting to lipid rafts and for caveolae formation. Tyrosine phosphorylated forms do not form heterooligomers with the Tyr-19-phosphorylated form existing as a monomer or dimer. Interacts (tyrosine phosphorylated form) with the SH2 domain-containing proteins, RASA1, NCK1 and SRC. Interacts (tyrosine phosphorylated form) with INSR. Interacts (Tyr-19 phosphorylated form) with MAPK1 (phosphorylated form); the interaction, promoted by insulin, leads to nuclear location and MAPK1 activation. Interacts with STAT3; the interaction is increased on insulin-induced tyrosine phosphorylation leading to STAT activation. In terms of processing, phosphorylated on serine and tyrosine residues. CAV1 promotes phosphorylation on Ser-23 which then targets the complex to the plasma membrane, lipid rafts and caveolae. Phosphorylation on Ser-36 appears to modulate mitosis in endothelial cells. Phosphorylation on Tyr-19 is required for insulin-induced phosphorylation of MAPK1 and DNA binding of STAT3. Tyrosine phosphorylation is induced by both EGF and insulin.

Its subcellular location is the nucleus. It localises to the cytoplasm. The protein resides in the golgi apparatus membrane. It is found in the cell membrane. The protein localises to the membrane. Its subcellular location is the caveola. In terms of biological role, may act as a scaffolding protein within caveolar membranes. Interacts directly with G-protein alpha subunits and can functionally regulate their activity. Acts as an accessory protein in conjunction with CAV1 in targeting to lipid rafts and driving caveolae formation. The Ser-36 phosphorylated form has a role in modulating mitosis in endothelial cells. Positive regulator of cellular mitogenesis of the MAPK signaling pathway. Required for the insulin-stimulated nuclear translocation and activation of MAPK1 and STAT3, and the subsequent regulation of cell cycle progression. The chain is Caveolin-2 (CAV2) from Canis lupus familiaris (Dog).